The following is a 538-amino-acid chain: Bifunctional purine biosynthesis protein PurH (538 aa).

An MGS-like domain is found at 8 to 158 (IPAPDKVEIK…KNHAYVTTLT (151 aa)).

The protein belongs to the PurH family.

The catalysed reaction is (6R)-10-formyltetrahydrofolate + 5-amino-1-(5-phospho-beta-D-ribosyl)imidazole-4-carboxamide = 5-formamido-1-(5-phospho-D-ribosyl)imidazole-4-carboxamide + (6S)-5,6,7,8-tetrahydrofolate. It catalyses the reaction IMP + H2O = 5-formamido-1-(5-phospho-D-ribosyl)imidazole-4-carboxamide. It functions in the pathway purine metabolism; IMP biosynthesis via de novo pathway; 5-formamido-1-(5-phospho-D-ribosyl)imidazole-4-carboxamide from 5-amino-1-(5-phospho-D-ribosyl)imidazole-4-carboxamide (10-formyl THF route): step 1/1. Its pathway is purine metabolism; IMP biosynthesis via de novo pathway; IMP from 5-formamido-1-(5-phospho-D-ribosyl)imidazole-4-carboxamide: step 1/1. The protein is Bifunctional purine biosynthesis protein PurH of Rhizobium johnstonii (strain DSM 114642 / LMG 32736 / 3841) (Rhizobium leguminosarum bv. viciae).